Here is a 306-residue protein sequence, read N- to C-terminus: Porphobilinogen deaminase (306 aa).

Cys-239 carries the S-(dipyrrolylmethanemethyl)cysteine modification.

It belongs to the HMBS family. As to quaternary structure, monomer. Dipyrromethane is required as a cofactor.

The enzyme catalyses 4 porphobilinogen + H2O = hydroxymethylbilane + 4 NH4(+). It functions in the pathway porphyrin-containing compound metabolism; protoporphyrin-IX biosynthesis; coproporphyrinogen-III from 5-aminolevulinate: step 2/4. Tetrapolymerization of the monopyrrole PBG into the hydroxymethylbilane pre-uroporphyrinogen in several discrete steps. The chain is Porphobilinogen deaminase from Helicobacter pylori (strain G27).